The sequence spans 269 residues: Interleukin-1 beta (269 aa).

Residues 1-112 (MAMVPEITCD…EEPITFKNCD (112 aa)) constitute a propeptide that is removed on maturation.

It belongs to the IL-1 family. Monomer. In its precursor form, weakly interacts with full-length MEFV; the mature cytokine does not interact at all. Interacts with integrins ITGAV:ITGBV and ITGA5:ITGB1; integrin-binding is required for IL1B signaling. Interacts with cargo receptor TMED10; the interaction is direct and is required for the secretion of IL1B mature form. Interacts with HSP90AB1; the interaction facilitates cargo translocation into the ERGIC. Interacts with HSP90B1; the interaction facilitates cargo translocation into the ERGIC.

It localises to the cytoplasm. The protein localises to the cytosol. The protein resides in the secreted. It is found in the lysosome. Its subcellular location is the extracellular exosome. In terms of biological role, potent pro-inflammatory cytokine. Initially discovered as the major endogenous pyrogen, induces prostaglandin synthesis, neutrophil influx and activation, T-cell activation and cytokine production, B-cell activation and antibody production, and fibroblast proliferation and collagen production. Promotes Th17 differentiation of T-cells. Synergizes with IL12/interleukin-12 to induce IFNG synthesis from T-helper 1 (Th1) cells. Plays a role in angiogenesis by inducing VEGF production synergistically with TNF and IL6. Involved in transduction of inflammation downstream of pyroptosis: its mature form is specifically released in the extracellular milieu by passing through the gasdermin-D (GSDMD) pore. This is Interleukin-1 beta (IL1B) from Trichosurus vulpecula (Brush-tailed possum).